Consider the following 353-residue polypeptide: Photosystem II D2 protein (353 aa).

An N-acetylthreonine modification is found at T2. Residue T2 is modified to Phosphothreonine. A helical transmembrane segment spans residues C41 to T61. Residue H118 participates in chlorophyll a binding. The helical transmembrane segment at G125–P141 threads the bilayer. The pheophytin a site is built by Q130 and N143. A helical transmembrane segment spans residues V153 to S166. A chlorophyll a-binding site is contributed by H198. A helical membrane pass occupies residues A208 to D228. Positions 215 and 262 each coordinate a plastoquinone. Residue H215 participates in Fe cation binding. H269 contacts Fe cation. The chain crosses the membrane as a helical span at residues G279–R295.

It belongs to the reaction center PufL/M/PsbA/D family. In terms of assembly, PSII is composed of 1 copy each of membrane proteins PsbA, PsbB, PsbC, PsbD, PsbE, PsbF, PsbH, PsbI, PsbJ, PsbK, PsbL, PsbM, PsbT, PsbX, PsbY, PsbZ, Psb30/Ycf12, at least 3 peripheral proteins of the oxygen-evolving complex and a large number of cofactors. It forms dimeric complexes. The D1/D2 heterodimer binds P680, chlorophylls that are the primary electron donor of PSII, and subsequent electron acceptors. It shares a non-heme iron and each subunit binds pheophytin, quinone, additional chlorophylls, carotenoids and lipids. There is also a Cl(-1) ion associated with D1 and D2, which is required for oxygen evolution. The PSII complex binds additional chlorophylls, carotenoids and specific lipids. serves as cofactor.

It localises to the plastid. The protein resides in the chloroplast thylakoid membrane. It catalyses the reaction 2 a plastoquinone + 4 hnu + 2 H2O = 2 a plastoquinol + O2. Its function is as follows. Photosystem II (PSII) is a light-driven water:plastoquinone oxidoreductase that uses light energy to abstract electrons from H(2)O, generating O(2) and a proton gradient subsequently used for ATP formation. It consists of a core antenna complex that captures photons, and an electron transfer chain that converts photonic excitation into a charge separation. The D1/D2 (PsbA/PsbD) reaction center heterodimer binds P680, the primary electron donor of PSII as well as several subsequent electron acceptors. D2 is needed for assembly of a stable PSII complex. This is Photosystem II D2 protein from Populus deltoides (Eastern poplar).